The sequence spans 285 residues: Bifunctional protein FolD (285 aa).

NADP(+) is bound by residues 165-167 (GRS) and S190.

Belongs to the tetrahydrofolate dehydrogenase/cyclohydrolase family. Homodimer.

It carries out the reaction (6R)-5,10-methylene-5,6,7,8-tetrahydrofolate + NADP(+) = (6R)-5,10-methenyltetrahydrofolate + NADPH. The catalysed reaction is (6R)-5,10-methenyltetrahydrofolate + H2O = (6R)-10-formyltetrahydrofolate + H(+). Its pathway is one-carbon metabolism; tetrahydrofolate interconversion. In terms of biological role, catalyzes the oxidation of 5,10-methylenetetrahydrofolate to 5,10-methenyltetrahydrofolate and then the hydrolysis of 5,10-methenyltetrahydrofolate to 10-formyltetrahydrofolate. The protein is Bifunctional protein FolD of Burkholderia multivorans (strain ATCC 17616 / 249).